Reading from the N-terminus, the 377-residue chain is Chaperone protein DnaJ (377 aa).

Residues 8–73 (CYYETLEVER…DKRAAYDRFG (66 aa)) enclose the J domain. A CR-type zinc finger spans residues 135–213 (GKTAQIEIPV…CSGQGRVTRE (79 aa)). Positions 148, 151, 165, 168, 187, 190, 201, and 204 each coordinate Zn(2+). CXXCXGXG motif repeat units lie at residues 148–155 (CEACSGIG), 165–172 (CSTCGGAG), 187–194 (CPGCQGRG), and 201–208 (CPSCSGQG).

The protein belongs to the DnaJ family. Homodimer. Zn(2+) is required as a cofactor.

It localises to the cytoplasm. Its function is as follows. Participates actively in the response to hyperosmotic and heat shock by preventing the aggregation of stress-denatured proteins and by disaggregating proteins, also in an autonomous, DnaK-independent fashion. Unfolded proteins bind initially to DnaJ; upon interaction with the DnaJ-bound protein, DnaK hydrolyzes its bound ATP, resulting in the formation of a stable complex. GrpE releases ADP from DnaK; ATP binding to DnaK triggers the release of the substrate protein, thus completing the reaction cycle. Several rounds of ATP-dependent interactions between DnaJ, DnaK and GrpE are required for fully efficient folding. Also involved, together with DnaK and GrpE, in the DNA replication of plasmids through activation of initiation proteins. This is Chaperone protein DnaJ from Bradyrhizobium diazoefficiens (strain JCM 10833 / BCRC 13528 / IAM 13628 / NBRC 14792 / USDA 110).